Here is a 93-residue protein sequence, read N- to C-terminus: UPF0250 protein PA3998 (93 aa).

The protein belongs to the UPF0250 family.

This chain is UPF0250 protein PA3998, found in Pseudomonas aeruginosa (strain ATCC 15692 / DSM 22644 / CIP 104116 / JCM 14847 / LMG 12228 / 1C / PRS 101 / PAO1).